A 191-amino-acid chain; its full sequence is Peptidyl-tRNA hydrolase (191 aa).

Tyrosine 16 contacts tRNA. Histidine 21 serves as the catalytic Proton acceptor. TRNA-binding residues include phenylalanine 67, asparagine 69, and asparagine 115.

The protein belongs to the PTH family. Monomer.

It localises to the cytoplasm. It carries out the reaction an N-acyl-L-alpha-aminoacyl-tRNA + H2O = an N-acyl-L-amino acid + a tRNA + H(+). Functionally, hydrolyzes ribosome-free peptidyl-tRNAs (with 1 or more amino acids incorporated), which drop off the ribosome during protein synthesis, or as a result of ribosome stalling. In terms of biological role, catalyzes the release of premature peptidyl moieties from peptidyl-tRNA molecules trapped in stalled 50S ribosomal subunits, and thus maintains levels of free tRNAs and 50S ribosomes. This chain is Peptidyl-tRNA hydrolase, found in Ruthia magnifica subsp. Calyptogena magnifica.